The sequence spans 339 residues: Probable N5-carboxyaminoimidazole ribonucleotide mutase (339 aa).

The substrate site is built by S11, D14, and R41.

Belongs to the AIR carboxylase family. Class I subfamily.

The enzyme catalyses 5-carboxyamino-1-(5-phospho-D-ribosyl)imidazole + H(+) = 5-amino-1-(5-phospho-D-ribosyl)imidazole-4-carboxylate. Its pathway is purine metabolism; IMP biosynthesis via de novo pathway; 5-amino-1-(5-phospho-D-ribosyl)imidazole-4-carboxylate from 5-amino-1-(5-phospho-D-ribosyl)imidazole (N5-CAIR route): step 2/2. Catalyzes the conversion of N5-carboxyaminoimidazole ribonucleotide (N5-CAIR) to 4-carboxy-5-aminoimidazole ribonucleotide (CAIR). This is Probable N5-carboxyaminoimidazole ribonucleotide mutase from Methanobrevibacter smithii.